The following is a 188-amino-acid chain: Elongation factor P (188 aa).

Lys-34 bears the N6-(3,6-diaminohexanoyl)-5-hydroxylysine mark.

It belongs to the elongation factor P family. In terms of processing, may be beta-lysylated on the epsilon-amino group of Lys-34 by the combined action of EpmA and EpmB, and then hydroxylated on the C5 position of the same residue by EpmC (if this protein is present). Lysylation is critical for the stimulatory effect of EF-P on peptide-bond formation. The lysylation moiety may extend toward the peptidyltransferase center and stabilize the terminal 3-CCA end of the tRNA. Hydroxylation of the C5 position on Lys-34 may allow additional potential stabilizing hydrogen-bond interactions with the P-tRNA.

It is found in the cytoplasm. Its pathway is protein biosynthesis; polypeptide chain elongation. Functionally, involved in peptide bond synthesis. Alleviates ribosome stalling that occurs when 3 or more consecutive Pro residues or the sequence PPG is present in a protein, possibly by augmenting the peptidyl transferase activity of the ribosome. Modification of Lys-34 is required for alleviation. This is Elongation factor P from Pectobacterium atrosepticum (strain SCRI 1043 / ATCC BAA-672) (Erwinia carotovora subsp. atroseptica).